The primary structure comprises 228 residues: Cytidylate kinase (228 aa).

Residue 11–19 coordinates ATP; it reads GPAGTGKSS.

This sequence belongs to the cytidylate kinase family. Type 1 subfamily.

It localises to the cytoplasm. The catalysed reaction is CMP + ATP = CDP + ADP. The enzyme catalyses dCMP + ATP = dCDP + ADP. In Mycolicibacterium paratuberculosis (strain ATCC BAA-968 / K-10) (Mycobacterium paratuberculosis), this protein is Cytidylate kinase.